We begin with the raw amino-acid sequence, 440 residues long: MKNYLSFGMFALLFALTFGTVNSVQAIAGPEWLLDRPSVNNSQLVVSVAGTVEGTNQDISLKFFEIDLTSRPAHGGKTEQGLSPKSKLFATDSGAMPHKLEKADLLKAIQEQLIANVHSNDDYFEVIDFASDATITDRNGKVYFADKDGSVTLPIQPVQEFLLKGHVRVRPYKEKPVQNQAKSVDVEYTVQFTPLNPDDDFRPALKDTKLLKTLAIGDTITSQELLAQAQSILNKNHPGYTIYERDSSIVTHDNDIFRTILPMDQEFTYHVKNREQAYRINKKSGLNEEINNTDLISEKYYVLKKGEKPYDPFDRSHLKLFTIKYVDVNTNELLKSEQLLTASERNLDFRDLYDPRDKAKLLYNNLDAFGIMDYTLTGKVEDNHDDTNRIITVYMGKRPEGENASYHLAYDKDRYTEEEREVYSYLRYTGTPIPDNPNDK.

The N-terminal stretch at 1–26 is a signal peptide; that stretch reads MKNYLSFGMFALLFALTFGTVNSVQA.

In terms of biological role, this protein is not a protease, but it activates plasminogen by complexing with it. As a potential virulence factor, it is thought to prevent the formation of effective fibrin barriers around the site of infection, thereby contributing to the invasiveness of the cells. This is Streptokinase G (skg) from Streptococcus sp. (strain 19909).